Here is a 512-residue protein sequence, read N- to C-terminus: Bifunctional purine biosynthesis protein PurH (512 aa).

Residues 1-144 form the MGS-like domain; sequence MKRALVSVSD…KNYHDVTIVV (144 aa).

It belongs to the PurH family.

It carries out the reaction (6R)-10-formyltetrahydrofolate + 5-amino-1-(5-phospho-beta-D-ribosyl)imidazole-4-carboxamide = 5-formamido-1-(5-phospho-D-ribosyl)imidazole-4-carboxamide + (6S)-5,6,7,8-tetrahydrofolate. The catalysed reaction is IMP + H2O = 5-formamido-1-(5-phospho-D-ribosyl)imidazole-4-carboxamide. Its pathway is purine metabolism; IMP biosynthesis via de novo pathway; 5-formamido-1-(5-phospho-D-ribosyl)imidazole-4-carboxamide from 5-amino-1-(5-phospho-D-ribosyl)imidazole-4-carboxamide (10-formyl THF route): step 1/1. The protein operates within purine metabolism; IMP biosynthesis via de novo pathway; IMP from 5-formamido-1-(5-phospho-D-ribosyl)imidazole-4-carboxamide: step 1/1. The protein is Bifunctional purine biosynthesis protein PurH of Limosilactobacillus reuteri (strain DSM 20016) (Lactobacillus reuteri).